Here is a 160-residue protein sequence, read N- to C-terminus: Nucleotide-binding protein VV1_2655 (160 aa).

Belongs to the YajQ family.

Nucleotide-binding protein. The sequence is that of Nucleotide-binding protein VV1_2655 from Vibrio vulnificus (strain CMCP6).